A 418-amino-acid chain; its full sequence is Thyroid hormone receptor alpha-A (418 aa).

The segment at 1 to 38 (MDQNLSGLDCLSEPDEKRWPDGKRKRKNSQCMGKSGMS) is disordered. Residues 1 to 60 (MDQNLSGLDCLSEPDEKRWPDGKRKRKNSQCMGKSGMSGDSLVSLPSAGYIPSYLDKDEP) are modulating. 2 consecutive NR C4-type zinc fingers follow at residues 61–81 (CVVCSDKATGYHYRCITCEGC) and 99–123 (CKYDGCCIIDKITRNQCQLCRFKKC). A DNA-binding region (nuclear receptor) is located at residues 61 to 135 (CVVCSDKATG…VGMAMDLVLD (75 aa)). Residues 171-415 (EEWELIRIVT…PPLFLEVFED (245 aa)) form the NR LBD domain.

It belongs to the nuclear hormone receptor family. NR1 subfamily. Binds to thyroid hormone receptor element (TRE) weakly as homodimers and monomers, but binds TRE with much higher affinity as heterodimers with retinoid X receptors. Can bind DNA as a heterodimer with either rxra or rxrg.

The protein resides in the nucleus. Its function is as follows. High affinity receptor for triiodothyronine (T3). The sequence is that of Thyroid hormone receptor alpha-A (thra-a) from Xenopus laevis (African clawed frog).